A 237-amino-acid polypeptide reads, in one-letter code: Urease accessory protein UreF (237 aa).

The protein belongs to the UreF family. As to quaternary structure, ureD, UreF and UreG form a complex that acts as a GTP-hydrolysis-dependent molecular chaperone, activating the urease apoprotein by helping to assemble the nickel containing metallocenter of UreC. The UreE protein probably delivers the nickel.

The protein localises to the cytoplasm. Its function is as follows. Required for maturation of urease via the functional incorporation of the urease nickel metallocenter. The chain is Urease accessory protein UreF from Methylibium petroleiphilum (strain ATCC BAA-1232 / LMG 22953 / PM1).